We begin with the raw amino-acid sequence, 42 residues long: MQDVKTYLSTAPVLATLWFGFLAGLLIEINRFFPDALVSPLF.

The helical transmembrane segment at 7–27 (YLSTAPVLATLWFGFLAGLLI) threads the bilayer.

It belongs to the PsaJ family.

It localises to the plastid. It is found in the chloroplast thylakoid membrane. Functionally, may help in the organization of the PsaE and PsaF subunits. The protein is Photosystem I reaction center subunit IX of Psilotum nudum (Whisk fern).